Reading from the N-terminus, the 379-residue chain is METLFHTLLRLLLFVAISHTLSPLAGSFRISNDFPAVFNFGDSNSDTGELSSGLGFLPQPSYEITFFRSPTSGRFCNGRLIVDFLMEAIDRPYLRPYLDSISRQTYRRGCNFAAAASTIQKANAASYSPFGFGVQVSQFITFKSKVLQLIQQDEELQRYLPSEYFFSNGLYMFDIGQNDIAGAFYTKTVDQVLALVPIILDIFQDGIKRLYAEGARNYWIHNTGPLGCLAQVVSIFGEDKSKLDEFGCVSDHNQAAKLFNLQLHGLFKKLPQQYPNSRFTYVDIFSIKSDLILNHSKYGFDHSIMVCCGTGGPPLNYDDQVGCGKTARSNGTIITAKPCYDSSKYVNWDGIHYTEAANRFVALHILTGKYSETASSLNL.

The N-terminal stretch at 1–27 (METLFHTLLRLLLFVAISHTLSPLAGS) is a signal peptide. The active-site Nucleophile is Ser43. Asn294 and Asn330 each carry an N-linked (GlcNAc...) asparagine glycan. Active-site residues include Asp349 and His352.

Belongs to the 'GDSL' lipolytic enzyme family.

It localises to the secreted. The protein is GDSL esterase/lipase At3g05180 of Arabidopsis thaliana (Mouse-ear cress).